Reading from the N-terminus, the 456-residue chain is MFS-type transporter ppzB (456 aa).

5 helical membrane passes run 1–21 (MGLF…PFIM), 38–58 (GFLA…GWAA), 72–92 (VFLF…LLVV), 125–145 (IGTI…LGGV), and 154–174 (AVFA…GLVI). The segment at 206–225 (EAQERTHEGTPLLPQDDDDD) is disordered. 6 consecutive transmembrane segments (helical) span residues 255-275 (LAML…ATVP), 284-304 (FSSL…FALG), 318-338 (AAAT…GLPE), 348-368 (VALF…VTSP), 398-418 (FGFS…LGGV), and 427-447 (VMGA…FLFV).

It belongs to the major facilitator superfamily. TCR/Tet family.

Its subcellular location is the membrane. In terms of biological role, MFS-type transporter; part of the gene cluster that mediates the biosynthesis of pyrrolopyrazines, secondary metabolites showing insecticidal activity. Probably involved in the secretion of peramine and other pyrrolopyrazines. The polypeptide is MFS-type transporter ppzB (ppzB) (Metarhizium majus (strain ARSEF 297)).